The sequence spans 299 residues: MLDNTRLRIAIQKSGRLSDDSRELLARCGIKINLHTQRLIAMAENMPIDILRVRDDDIPGLVMDGVVDLGIIGENVLEEELLNRRAQGEDPRYLTLRRLDFGGCRLSLATPVDEAWDGPAALDGKRIATSYPHLLKRYLDQKGVSFKSCLLNGSVEVAPRAGLADAICDLVSTGATLEANGLREVEVIYRSKACLIQRDGEMAQSKQELIDKLLTRIQGVIQARESKYIMMHAPSERLEEVIALLPGAERPTILPLAGEQQRVAMHMVSSETLFWETMEKLKALGASSILVLPIEKMME.

This sequence belongs to the ATP phosphoribosyltransferase family. Long subfamily. Equilibrium between an active dimeric form, an inactive hexameric form and higher aggregates. Interconversion between the various forms is largely reversible and is influenced by the natural substrates and inhibitors of the enzyme. Mg(2+) is required as a cofactor.

Its subcellular location is the cytoplasm. The catalysed reaction is 1-(5-phospho-beta-D-ribosyl)-ATP + diphosphate = 5-phospho-alpha-D-ribose 1-diphosphate + ATP. Its pathway is amino-acid biosynthesis; L-histidine biosynthesis; L-histidine from 5-phospho-alpha-D-ribose 1-diphosphate: step 1/9. Feedback inhibited by histidine. Catalyzes the condensation of ATP and 5-phosphoribose 1-diphosphate to form N'-(5'-phosphoribosyl)-ATP (PR-ATP). Has a crucial role in the pathway because the rate of histidine biosynthesis seems to be controlled primarily by regulation of HisG enzymatic activity. The protein is ATP phosphoribosyltransferase of Salmonella choleraesuis (strain SC-B67).